Consider the following 499-residue polypeptide: Putative ribose/galactose/methyl galactoside import ATP-binding protein 3 (499 aa).

ABC transporter domains lie at 8–243 and 253–497; these read LRMR…VGRE and SKIG…TGEE. Position 40–47 (40–47) interacts with ATP; it reads GENGAGKS.

The protein belongs to the ABC transporter superfamily. Carbohydrate importer 2 (CUT2) (TC 3.A.1.2) family.

Its subcellular location is the cell inner membrane. It catalyses the reaction D-ribose(out) + ATP + H2O = D-ribose(in) + ADP + phosphate + H(+). The enzyme catalyses D-galactose(out) + ATP + H2O = D-galactose(in) + ADP + phosphate + H(+). Functionally, part of an ABC transporter complex involved in carbohydrate import. Could be involved in ribose, galactose and/or methyl galactoside import. Responsible for energy coupling to the transport system. The protein is Putative ribose/galactose/methyl galactoside import ATP-binding protein 3 of Agrobacterium fabrum (strain C58 / ATCC 33970) (Agrobacterium tumefaciens (strain C58)).